Here is a 206-residue protein sequence, read N- to C-terminus: Ribosome maturation factor RimP (206 aa).

Residues 164-206 (GGIPEGRAVPSDAVDLTDDSGVDSVEDDEAELEDVENEEGFDK) are disordered. Positions 178–206 (DLTDDSGVDSVEDDEAELEDVENEEGFDK) are enriched in acidic residues.

It belongs to the RimP family.

The protein localises to the cytoplasm. Its function is as follows. Required for maturation of 30S ribosomal subunits. The protein is Ribosome maturation factor RimP of Rhodococcus erythropolis (strain PR4 / NBRC 100887).